The sequence spans 80 residues: RNA-binding protein Hfq (80 aa).

The Sm domain maps to 10 to 70 (DLFLNTVRKQ…ISTIMPGQPM (61 aa)).

The protein belongs to the Hfq family. Homohexamer.

In terms of biological role, RNA chaperone that binds small regulatory RNA (sRNAs) and mRNAs to facilitate mRNA translational regulation in response to envelope stress, environmental stress and changes in metabolite concentrations. Also binds with high specificity to tRNAs. The protein is RNA-binding protein Hfq of Agrobacterium fabrum (strain C58 / ATCC 33970) (Agrobacterium tumefaciens (strain C58)).